A 1496-amino-acid polypeptide reads, in one-letter code: Carbamoyl-phosphate synthase [ammonia], mitochondrial (1496 aa).

The transit peptide at 1–33 (MTRILSVFKTAKTGVLNAAAHRYRGFSKAGVRL) directs the protein to the mitochondrion. The anthranilate phosphoribosyltransferase homolog stretch occupies residues 34–214 (MSVKAQTANL…TKVFGKGNPV (181 aa)). The Glutamine amidotransferase type-1 domain occupies 215-401 (RIVAVDCGVK…MSLIKKGKGT (187 aa)). The active-site For GATase activity is C290. 2 ATP-grasp domains span residues 548–740 (SDKL…KIAL) and 1090–1281 (SAVL…KVMI). Residues 1352–1496 (FKLPQKGILI…YRQFGGAKPS (145 aa)) form the MGS-like domain. 6 residues coordinate N-acetyl-L-glutamate: T1388, T1391, W1407, N1433, N1436, and N1445.

Its subcellular location is the mitochondrion. The catalysed reaction is hydrogencarbonate + NH4(+) + 2 ATP = carbamoyl phosphate + 2 ADP + phosphate + 2 H(+). With respect to regulation, requires N-acetyl-L-glutamate (NAG) as an allosteric activator. Its function is as follows. Involved in the urea cycle of ureotelic animals where the enzyme plays an important role in removing excess ammonia from the cell. The sequence is that of Carbamoyl-phosphate synthase [ammonia], mitochondrial from Aquarana catesbeiana (American bullfrog).